Reading from the N-terminus, the 313-residue chain is Carbamate kinase 2 (313 aa).

This sequence belongs to the carbamate kinase family.

It is found in the cytoplasm. It catalyses the reaction hydrogencarbonate + NH4(+) + ATP = carbamoyl phosphate + ADP + H2O + H(+). The protein operates within metabolic intermediate metabolism; carbamoyl phosphate degradation; CO(2) and NH(3) from carbamoyl phosphate: step 1/1. This Staphylococcus aureus (strain bovine RF122 / ET3-1) protein is Carbamate kinase 2 (arcC2).